The following is a 501-amino-acid chain: Aldehyde dehydrogenase mpl4 (501 aa).

Residue 231 to 236 (GSTASG) participates in NAD(+) binding. Catalysis depends on residues Glu253 and Cys287.

The protein belongs to the aldehyde dehydrogenase family.

The enzyme catalyses an aldehyde + NAD(+) + H2O = a carboxylate + NADH + 2 H(+). It functions in the pathway mycotoxin biosynthesis. In terms of biological role, aldehyde dehydrogenase; part of the gene cluster that mediates the biosynthesis of the mycotoxin citrinin, a hepato-nephrotoxic compound to humans due to inhibition of respiration complex III. The pathway begins with the synthesis of a keto-aldehyde intermediate by the citrinin PKS (pksCT) from successive condensations of 4 malonyl-CoA units, presumably with a simple acetyl-CoA starter unit. Release of the keto-aldehyde intermediate is consistent with the presence of the C-terminal reductive release domain. Mp11 collaborates with pksCT by catalyzing the hydrolysis of ACP-bound acyl intermediates to free the ACP from stalled intermediates. Mpl2 then catalyzes the oxidation of the C-12 methyl of the ketone intermediate to an alcohol intermediate which is further oxidized by the oxidoreductase mpl7 to produce a bisaldehyde intermediate. The fourth catalytic step is catalyzed by the mpl4 aldehyde dehydrogenase. The final transformation is the reduction of C-3 by mpl6 to provide the chemically stable citrinin nucleus. This chain is Aldehyde dehydrogenase mpl4, found in Monascus purpureus (Red mold).